The primary structure comprises 1276 residues: Probable ubiquitin carboxyl-terminal hydrolase K02C4.3 (1276 aa).

The USP domain maps to 168–762; that stretch reads TGLYNSGNTC…SAYMLMYVRS (595 aa). Cysteine 177 functions as the Nucleophile in the catalytic mechanism. The disordered stretch occupies residues 375-402; the sequence is SMDTEAATSSNLPGNSVENHPNPAAPEV. The span at 380–393 shows a compositional bias: polar residues; that stretch reads AATSSNLPGNSVEN. Catalysis depends on histidine 707, which acts as the Proton acceptor.

The protein belongs to the peptidase C19 family.

The enzyme catalyses Thiol-dependent hydrolysis of ester, thioester, amide, peptide and isopeptide bonds formed by the C-terminal Gly of ubiquitin (a 76-residue protein attached to proteins as an intracellular targeting signal).. In Caenorhabditis elegans, this protein is Probable ubiquitin carboxyl-terminal hydrolase K02C4.3.